A 379-amino-acid chain; its full sequence is ATP phosphoribosyltransferase regulatory subunit (379 aa).

It belongs to the class-II aminoacyl-tRNA synthetase family. HisZ subfamily. In terms of assembly, heteromultimer composed of HisG and HisZ subunits.

It is found in the cytoplasm. It participates in amino-acid biosynthesis; L-histidine biosynthesis; L-histidine from 5-phospho-alpha-D-ribose 1-diphosphate: step 1/9. Functionally, required for the first step of histidine biosynthesis. May allow the feedback regulation of ATP phosphoribosyltransferase activity by histidine. This chain is ATP phosphoribosyltransferase regulatory subunit, found in Paramagnetospirillum magneticum (strain ATCC 700264 / AMB-1) (Magnetospirillum magneticum).